A 267-amino-acid chain; its full sequence is 2-keto-3-deoxy-L-rhamnonate aldolase (267 aa).

The active-site Proton acceptor is the histidine 49. Glutamine 151 lines the substrate pocket. Glutamate 153 serves as a coordination point for Mg(2+). Alanine 178 and aspartate 179 together coordinate substrate. Aspartate 179 provides a ligand contact to Mg(2+).

It belongs to the HpcH/HpaI aldolase family. KDR aldolase subfamily. As to quaternary structure, homohexamer. Mg(2+) is required as a cofactor.

The enzyme catalyses 2-dehydro-3-deoxy-L-rhamnonate = (S)-lactaldehyde + pyruvate. In terms of biological role, catalyzes the reversible retro-aldol cleavage of 2-keto-3-deoxy-L-rhamnonate (KDR) to pyruvate and lactaldehyde. The sequence is that of 2-keto-3-deoxy-L-rhamnonate aldolase from Shigella boydii serotype 4 (strain Sb227).